A 179-amino-acid polypeptide reads, in one-letter code: uncharacterized protein (179 aa).

4 helical membrane passes run 33–53, 63–83, 89–109, and 115–135; these read HIIA…VILD, VMFI…MLVL, ITAS…FVLT, and FSPF…EYFF.

It is found in the cell membrane. This is an uncharacterized protein from Bacillus subtilis (strain 168).